The chain runs to 885 residues: Isoleucine--tRNA ligase (885 aa).

The 'HIGH' region motif lies at 59 to 69 (PYANGDLHIGH). Residue Glu550 participates in L-isoleucyl-5'-AMP binding. Positions 591-595 (KMSKS) match the 'KMSKS' region motif. Residue Lys594 coordinates ATP. The Zn(2+) site is built by Cys861, Cys864, Cys877, and Cys880.

This sequence belongs to the class-I aminoacyl-tRNA synthetase family. IleS type 1 subfamily. In terms of assembly, monomer. Requires Zn(2+) as cofactor.

The protein resides in the cytoplasm. It catalyses the reaction tRNA(Ile) + L-isoleucine + ATP = L-isoleucyl-tRNA(Ile) + AMP + diphosphate. Functionally, catalyzes the attachment of isoleucine to tRNA(Ile). As IleRS can inadvertently accommodate and process structurally similar amino acids such as valine, to avoid such errors it has two additional distinct tRNA(Ile)-dependent editing activities. One activity is designated as 'pretransfer' editing and involves the hydrolysis of activated Val-AMP. The other activity is designated 'posttransfer' editing and involves deacylation of mischarged Val-tRNA(Ile). The sequence is that of Isoleucine--tRNA ligase from Mycoplasma mobile (strain ATCC 43663 / 163K / NCTC 11711) (Mesomycoplasma mobile).